We begin with the raw amino-acid sequence, 283 residues long: Spore coat polysaccharide biosynthesis protein SpsK (283 aa).

It belongs to the dTDP-4-dehydrorhamnose reductase family.

The protein operates within spore coat biogenesis; spore coat polysaccharide biosynthesis. This is Spore coat polysaccharide biosynthesis protein SpsK (spsK) from Bacillus subtilis (strain 168).